We begin with the raw amino-acid sequence, 370 residues long: Dual-specificity RNA methyltransferase RlmN (370 aa).

Glu93 acts as the Proton acceptor in catalysis. Residues 99–337 (EEGRGTLCVS…VTTVRKTRGD (239 aa)) enclose the Radical SAM core domain. Cys106 and Cys343 form a disulfide bridge. Cys113, Cys117, and Cys120 together coordinate [4Fe-4S] cluster. S-adenosyl-L-methionine-binding positions include 167 to 168 (GE), Ser199, 221 to 223 (SLH), and Asn300. The active-site S-methylcysteine intermediate is the Cys343.

Belongs to the radical SAM superfamily. RlmN family. Requires [4Fe-4S] cluster as cofactor.

The protein resides in the cytoplasm. The catalysed reaction is adenosine(2503) in 23S rRNA + 2 reduced [2Fe-2S]-[ferredoxin] + 2 S-adenosyl-L-methionine = 2-methyladenosine(2503) in 23S rRNA + 5'-deoxyadenosine + L-methionine + 2 oxidized [2Fe-2S]-[ferredoxin] + S-adenosyl-L-homocysteine. It catalyses the reaction adenosine(37) in tRNA + 2 reduced [2Fe-2S]-[ferredoxin] + 2 S-adenosyl-L-methionine = 2-methyladenosine(37) in tRNA + 5'-deoxyadenosine + L-methionine + 2 oxidized [2Fe-2S]-[ferredoxin] + S-adenosyl-L-homocysteine. Its function is as follows. Specifically methylates position 2 of adenine 2503 in 23S rRNA and position 2 of adenine 37 in tRNAs. m2A2503 modification seems to play a crucial role in the proofreading step occurring at the peptidyl transferase center and thus would serve to optimize ribosomal fidelity. This is Dual-specificity RNA methyltransferase RlmN from Francisella tularensis subsp. novicida (strain U112).